A 354-amino-acid chain; its full sequence is Biotin synthase (354 aa).

In terms of domain architecture, Radical SAM core spans 41-265 (NEVQISRLLS…LMPHSRVRLS (225 aa)). Residues C56, C60, and C63 each coordinate [4Fe-4S] cluster. 4 residues coordinate [2Fe-2S] cluster: C100, C131, C191, and R263.

It belongs to the radical SAM superfamily. Biotin synthase family. As to quaternary structure, homodimer. [4Fe-4S] cluster is required as a cofactor. [2Fe-2S] cluster serves as cofactor.

The enzyme catalyses (4R,5S)-dethiobiotin + (sulfur carrier)-SH + 2 reduced [2Fe-2S]-[ferredoxin] + 2 S-adenosyl-L-methionine = (sulfur carrier)-H + biotin + 2 5'-deoxyadenosine + 2 L-methionine + 2 oxidized [2Fe-2S]-[ferredoxin]. It participates in cofactor biosynthesis; biotin biosynthesis; biotin from 7,8-diaminononanoate: step 2/2. In terms of biological role, catalyzes the conversion of dethiobiotin (DTB) to biotin by the insertion of a sulfur atom into dethiobiotin via a radical-based mechanism. This chain is Biotin synthase, found in Shewanella woodyi (strain ATCC 51908 / MS32).